Here is a 607-residue protein sequence, read N- to C-terminus: Bifunctional lysine-specific demethylase and histidyl-hydroxylase NO66 (607 aa).

Disordered stretches follow at residues Gly23–Asn121 and Ala139–Glu184. The span at Thr25 to Thr37 shows a compositional bias: polar residues. Residues Ser39–Lys58 are compositionally biased toward basic residues. Over residues Asp156–Thr167 the composition is skewed to basic and acidic residues. The JmjC domain occupies Glu188–Ala405. Fe cation-binding residues include His328, Asp330, and His371.

Belongs to the ROX family. NO66 subfamily. Requires Fe(2+) as cofactor.

Its subcellular location is the nucleus. It catalyses the reaction L-histidyl-[protein] + 2-oxoglutarate + O2 = (3S)-3-hydroxy-L-histidyl-[protein] + succinate + CO2. The catalysed reaction is N(6),N(6)-dimethyl-L-lysyl(36)-[histone H3] + 2 2-oxoglutarate + 2 O2 = L-lysyl(36)-[histone H3] + 2 formaldehyde + 2 succinate + 2 CO2. Oxygenase that can act as both a histone lysine demethylase and a ribosomal histidine hydroxylase. Specifically demethylates 'Lys-4' (H3K4me) and 'Lys-36' (H3K36me) of histone H3, thereby playing a central role in histone code. Also catalyzes the hydroxylation of 60S ribosomal protein L8. The polypeptide is Bifunctional lysine-specific demethylase and histidyl-hydroxylase NO66 (Branchiostoma floridae (Florida lancelet)).